Reading from the N-terminus, the 352-residue chain is DNA ADP-ribosyl glycohydrolase (352 aa).

Residues 1-155 form the Macro domain; that stretch reads MITYGSGDLL…IYPPSGGSRA (155 aa). Residues 8–9, 20–22, 31–34, and threonine 79 contribute to the ADP-D-ribose site; these read DL, TVN, and IALQ. Lysine 80 (nucleophile) is an active-site residue. 117–121 serves as a coordination point for ADP-D-ribose; sequence GVGNG. The segment at 164 to 352 is interaction with DarT; the sequence is MTWGRAVILE…VALDRILMTA (189 aa).

This sequence belongs to the DarG ADP-ribosyl glycohydrolase family. In terms of assembly, interacts (via C-terminus) with cognate toxin DarT; this heterodimeric complex neutralizes the toxic effect of DarT by preventing ssDNA binding to DarT and consequently inactivating the toxin by direct protein-protein interactions.

It carries out the reaction an N-(ADP-alpha-D-ribosyl)-thymidine in DNA + H2O = a thymidine in DNA + ADP-D-ribose. In terms of biological role, antitoxin component of the hybrid type II/IV toxin-antitoxin (TA) system DarTG, which plays a crucial role in controlling bacterial growth and bacteriophage infection. De-ADP-ribosylates DNA (probably) modified on thymidine by its cognate toxin DarT, which neutralizes the activity of cognate toxin DarT. The chain is DNA ADP-ribosyl glycohydrolase from Mycobacterium bovis (strain BCG / Pasteur 1173P2).